Consider the following 126-residue polypeptide: Holo-[acyl-carrier-protein] synthase (126 aa).

Asp9 and Glu58 together coordinate Mg(2+).

This sequence belongs to the P-Pant transferase superfamily. AcpS family. Mg(2+) serves as cofactor.

It is found in the cytoplasm. The catalysed reaction is apo-[ACP] + CoA = holo-[ACP] + adenosine 3',5'-bisphosphate + H(+). Functionally, transfers the 4'-phosphopantetheine moiety from coenzyme A to a Ser of acyl-carrier-protein. This Serratia proteamaculans (strain 568) protein is Holo-[acyl-carrier-protein] synthase.